A 452-amino-acid polypeptide reads, in one-letter code: Maltoporin (452 aa).

The first 25 residues, 1-25, serve as a signal peptide directing secretion; the sequence is MMITLRKLPLAVAVAAGVMSAQAMA.

This sequence belongs to the porin LamB (TC 1.B.3) family. As to quaternary structure, homotrimer formed of three 18-stranded antiparallel beta-barrels, containing three independent channels.

It localises to the cell outer membrane. The enzyme catalyses beta-maltose(in) = beta-maltose(out). Functionally, involved in the transport of maltose and maltodextrins. This Salmonella enteritidis PT4 (strain P125109) protein is Maltoporin.